A 247-amino-acid chain; its full sequence is Osmotin-like protein NP24-I (247 aa).

Residues Met-1–Ala-21 form the signal peptide. Cystine bridges form between Cys-30/Cys-225, Cys-72/Cys-82, Cys-87/Cys-93, Cys-141/Cys-213, Cys-146/Cys-196, Cys-154/Cys-164, Cys-168/Cys-177, and Cys-178/Cys-183.

This sequence belongs to the thaumatin family. As to expression, highest levels of both isoforms found in the outer pericarp, with smaller amounts in the inner pericarp.

The protein localises to the cytoplasm. The protein resides in the vacuole. The catalysed reaction is Endohydrolysis of (1-&gt;3)- or (1-&gt;4)-linkages in beta-D-glucans when the glucose residue whose reducing group is involved in the linkage to be hydrolyzed is itself substituted at C-3.. In terms of biological role, has antifungal activity against P.betae and F.dahliae. May be involved in disease resistance in tomatoes and/or have a possible role in fruit development and ripening. Binds to beta-glucans and exhibits beta-1,3-D-glucanase activity. In Solanum lycopersicum (Tomato), this protein is Osmotin-like protein NP24-I.